Here is a 191-residue protein sequence, read N- to C-terminus: Ribosomal RNA small subunit methyltransferase G (191 aa).

S-adenosyl-L-methionine-binding positions include G62, F67, 111-112 (IE), and R124.

The protein belongs to the methyltransferase superfamily. RNA methyltransferase RsmG family.

Its subcellular location is the cytoplasm. It carries out the reaction guanosine(527) in 16S rRNA + S-adenosyl-L-methionine = N(7)-methylguanosine(527) in 16S rRNA + S-adenosyl-L-homocysteine. Its function is as follows. Specifically methylates the N7 position of guanine in position 527 of 16S rRNA. This is Ribosomal RNA small subunit methyltransferase G from Rickettsia typhi (strain ATCC VR-144 / Wilmington).